A 178-amino-acid polypeptide reads, in one-letter code: Probable apo-citrate lyase phosphoribosyl-dephospho-CoA transferase (178 aa).

It belongs to the CitX family.

The enzyme catalyses apo-[citrate lyase ACP] + 2'-(5''-triphospho-alpha-D-ribosyl)-3'-dephospho-CoA = holo-[citrate lyase ACP] + diphosphate. Transfers 2-(5''-triphosphoribosyl)-3'-dephosphocoenzyme-A on a serine residue to the apo-acyl carrier protein (gamma chain) of the citrate lyase to yield holo-acyl carrier protein. The chain is Probable apo-citrate lyase phosphoribosyl-dephospho-CoA transferase from Vibrio cholerae serotype O1 (strain ATCC 39541 / Classical Ogawa 395 / O395).